Consider the following 508-residue polypeptide: MMRQDRRNLLERNILVFSNKLQSEQILEVLIAKQILNADNGDVINSCRTERDKRKEIVKAVQRRGDVAFDAFYDALRDTGHHELAAVLEPLARTIDFITPRDLECPMSPASHRRSRALSPSTFSSPTRVHRDSVSSVSSFTSTYQDVYTRARSTSRSSRPLHASDRHNYVSPSNSFQSQPSSANSSFTGCSSLGYSSSRTRSYSKASAHSQYIFHEEDMNYVDAPTIHRVFDEKTMYRNFSTPRGLCLIINNEHFEQMPTRNGTKADKDNISNLFRCMGYIVHCKDNLTGRAMMLTIRDFAKNETHGDSAILVILSHGEENVIIGVDDVSVNVHEIYDLLNAANAPRLANKPKLVFVQACRGERRDNGFPVLDSVDGVPALIRPRGWDKGDGPLFNFLGCVRPQAQQVWRKKPSQADILIAYATTAQYVSWRNSARGSWFIQAVCEVFSLHAKDMDVVELLTEVNKKVACGFQTSQGANILKQMPELTSRLLKKFYFWPEDRNRSSAV.

The propeptide occupies 1–223 (MMRQDRRNLL…FHEEDMNYVD (223 aa)). The CARD domain maps to 2–91 (MRQDRRNLLE…HELAAVLEPL (90 aa)). 2 disordered regions span residues 106 to 130 (PMSP…TRVH) and 148 to 184 (YTRA…SSAN). Residues 118–127 (LSPSTFSSPT) are compositionally biased toward polar residues. Over residues 171-184 (SPSNSFQSQPSSAN) the composition is skewed to low complexity. Residues H317 and C360 contribute to the active site. A required for interaction with ced-4 region spans residues 392 to 407 (GPLFNFLGCVRPQAQQ).

This sequence belongs to the peptidase C14A family. In terms of assembly, the active form is probably a heterodimer of the p17 subunit with either the p15 or p13 subunit which are all derived from the precursor by autocatalysis. Interacts with octameric ced-4 (two ced-3 zymogens per one ced-4 octamer); the interaction causes the autoproteolytic cleavage and activation of ced-3. Processed ced-3 also interacts with ced-4 octamer to form a stable holoenzyme. Interacts (via large subunit p17) with csp-3; the interaction prevents ced-3 autoactivation and delays ced-4-induced ced-3 processing. Interacts (via large subunit p17 or small subunit p13 or p15) with csp-2; the interaction inhibits ced-3 autoactivation. Interacts (via propeptide) with nucleoporin npp-14; the interaction tethers ced-3 to the nuclear membrane and prevents its autoprocessing in absence of ced-4. Interacts with dct-1. May form a complex composed of ced-3, ced-4 and mac-1. Post-translationally, autocatalytic cleavage removes the propeptide and generates the catalytic subunit p17 and two non-catalytic subunits p15 and p13; autoproteolysis is induced by ced-4 oligomer. Cleaved by caspase csp-1 probably at Asp-146 and Asp-376.

It is found in the nucleus membrane. Its subcellular location is the perikaryon. It localises to the synapse. The protein localises to the mitochondrion. The protein resides in the cytoplasm. It is found in the perinuclear region. It carries out the reaction Strict requirement for an Asp residue at position P1 and has a preferred cleavage sequence of Asp-Glu-Val-Asp-|-.. Its activity is regulated as follows. Octameric ced-4 activates zymogen autoprocessing and enhances activity of processed ced-3. Zymogen autoactivation is inhibited by csp-3. csp-3 has no effect on active ced-3. Zymogen autoactivation is inhibited by csp-2. Inhibited by cysteine protease inhibitor iodoacetic acid (CH3COOI). Inhibited by benzyloxycarbonyl-DEVD-fluoro-methyl ketone (zDEVD-fmk). Inhibited by benzyloxycarbonyl-VAD-fluoro-methyl ketone (zVAD-fmk). Not inhibited by N-[N-(L-3-transcarboxirane-2-carbonyl)-leucyl]-agmatine (E-64) or by the serine and cysteine protease inhibitor L-1-chloro-3-[4-to-osylamido]-7-amino-2-heptanone (TLCK). In terms of biological role, acts as a cysteine protease in controlling programmed cell death (apoptosis) by proteolytically activating or inactivating a wide range of substrates. Component of the egl-1, ced-9, ced-4 and ced-3 apoptotic signaling cascade required for the initiation of programmed cell death in cells fated to die during embryonic and postembryonic development. During oogenesis, required for germline apoptosis downstream of ced-9 and ced-4 but independently of egl-1. By cleaving and activating ced-8, promotes phosphatidylserine exposure on the surface of apoptotic cells; phosphatidylserine is a specific marker only present at the surface of apoptotic cells and acts as a specific signal for engulfment. By cleaving and converting dcr-1 into a deoxyribonuclease (DNase), promotes apoptotic chromosomal DNA fragmentation. By cleaving mitochondrial fission protein drp-1, may regulate the removal of mitochondria during apoptosis. During germline apoptosis, cleaves translation initiation factor ifg-1 (isoform p170) promoting cap-independent translation. During male tail morphogenesis, promotes apoptosis of the tail-spike cell downstream of ced-4 but independently of egl-1 and ced-9. By cleaving cnt-1, prevents the activation of the prosurvival akt-1/2 signaling pathway and thus promotes apoptosis. Downstream of ced-4, may play a role in sex-specific cell apoptosis by cleaving sex-determining protein fem-1. May regulate germline apoptosis in response to DNA damage, probably downstream of let-60/ras and mpk-1 pathway. Cleaves ced-9 in vitro. Cleaves csp-2 isoform b resulting in the removal of the propeptide and the generation of csp-2 subunit p31 in vitro. Independently of its apoptotic role has additional functions. Probably by cleaving and thereby activating actin-severing protein gsnl-1, required for the elimination of transient presynaptic components during larval development downstream of egl-1, ced-9 and ced-4 pathway. Together with ain-1, a component of the miRNA-induced-silencing complex (miRISC), regulates temporal cell fate patterning during larval development. Acts in cell fate patterning by cleaving heterochronic protein lin-28, likely promoting its degradation. Also cleaves heterochronic protein lin-14 and exonuclease disl-2 in vitro. Downstream of calreticulin crt-1 and ced-4 and independently of egl-1 and ced-9, plays a role in the initial steps of axonal regrowth following axotomy. Cleaves 14-3-3-like protein ftt-2, tubulin tbb-2 and calreticulin crt-1 in vitro. Plays also a role in resistance to S.typhimurium-mediated infection. This is Cell death protein 3 from Caenorhabditis remanei (Caenorhabditis vulgaris).